We begin with the raw amino-acid sequence, 142 residues long: Hemoglobin subunit beta-1 (142 aa).

Positions serine 2–histidine 142 constitute a Globin domain. Residues histidine 59 and histidine 88 each coordinate heme b.

This sequence belongs to the globin family. As to quaternary structure, heterotetramer of two alpha chains and two beta chains. Red blood cells.

In terms of biological role, involved in oxygen transport from the lung to the various peripheral tissues. In Torpedo marmorata (Marbled electric ray), this protein is Hemoglobin subunit beta-1 (HBB1).